Reading from the N-terminus, the 323-residue chain is ATP synthase gamma chain (323 aa).

Belongs to the ATPase gamma chain family. As to quaternary structure, F-type ATPases have 2 components, CF(1) - the catalytic core - and CF(0) - the membrane proton channel. CF(1) has five subunits: alpha(3), beta(3), gamma(1), delta(1), epsilon(1). CF(0) has three main subunits: a, b and c.

The protein localises to the cell inner membrane. Its function is as follows. Produces ATP from ADP in the presence of a proton gradient across the membrane. The gamma chain is believed to be important in regulating ATPase activity and the flow of protons through the CF(0) complex. This Rickettsia peacockii (strain Rustic) protein is ATP synthase gamma chain.